The chain runs to 321 residues: Ribosomal RNA small subunit methyltransferase H (321 aa).

S-adenosyl-L-methionine is bound by residues 40 to 42 (GGH), Asp-60, Phe-84, Asp-106, and Gln-113.

The protein belongs to the methyltransferase superfamily. RsmH family.

It localises to the cytoplasm. The catalysed reaction is cytidine(1402) in 16S rRNA + S-adenosyl-L-methionine = N(4)-methylcytidine(1402) in 16S rRNA + S-adenosyl-L-homocysteine + H(+). Its function is as follows. Specifically methylates the N4 position of cytidine in position 1402 (C1402) of 16S rRNA. The sequence is that of Ribosomal RNA small subunit methyltransferase H from Histophilus somni (strain 2336) (Haemophilus somnus).